We begin with the raw amino-acid sequence, 61 residues long: Conotoxin TeAr154 (61 aa).

Positions 1 to 19 (MHCLPVFVILLLLTASGLS) are cleaved as a signal peptide. Positions 20–47 (VDARPKTEDDVPLSSFRDNTKSTLQRLL) are excised as a propeptide. Glu57 carries the 4-carboxyglutamate modification.

In terms of processing, contains 2 disulfide bonds that can be either 'C1-C3, C2-C4' or 'C1-C4, C2-C3', since these disulfide connectivities have been observed for conotoxins with cysteine framework V (for examples, see AC P0DQQ7 and AC P81755). Post-translationally, contains 2 disulfide bonds. As to expression, expressed by the venom duct.

It localises to the secreted. The sequence is that of Conotoxin TeAr154 from Conus textile (Cloth-of-gold cone).